The chain runs to 491 residues: Cytochrome P450 2F1 (491 aa).

A heme-binding site is contributed by Cys-436.

It belongs to the cytochrome P450 family. Heme is required as a cofactor. In terms of tissue distribution, expressed in lung. Rarely detected in liver and placenta.

It is found in the endoplasmic reticulum membrane. It localises to the microsome membrane. It carries out the reaction an organic molecule + reduced [NADPH--hemoprotein reductase] + O2 = an alcohol + oxidized [NADPH--hemoprotein reductase] + H2O + H(+). Its function is as follows. May be involved in the metabolism of various pneumotoxicants including naphthalene. Is able to dealkylate ethoxycoumarin, propoxycoumarin, and pentoxyresorufin but possesses no activity toward ethoxyresorufin and only trace dearylation activity toward benzyloxyresorufin. Bioactivates 3-methylindole (3MI) by dehydrogenation to the putative electrophile 3-methylene-indolenine. This is Cytochrome P450 2F1 (CYP2F1) from Homo sapiens (Human).